Here is a 322-residue protein sequence, read N- to C-terminus: Phosphoserine phosphatase (322 aa).

10-12 (PED) contacts substrate. The Mg(2+) site is built by Asp-12, Asp-116, and Asp-118. Asp-116 serves as the catalytic Nucleophile. Asp-118 functions as the Proton donor in the catalytic mechanism. Substrate-binding positions include Glu-125, Arg-161, 204–205 (SG), and Lys-249. Asp-272 is a binding site for Mg(2+). Residue Asn-275 participates in substrate binding.

Belongs to the HAD-like hydrolase superfamily. SerB family. Mg(2+) is required as a cofactor.

It carries out the reaction O-phospho-L-serine + H2O = L-serine + phosphate. The catalysed reaction is O-phospho-D-serine + H2O = D-serine + phosphate. It participates in amino-acid biosynthesis; L-serine biosynthesis; L-serine from 3-phospho-D-glycerate: step 3/3. Its function is as follows. Catalyzes the dephosphorylation of phosphoserine (P-Ser). This is Phosphoserine phosphatase (serB) from Escherichia coli O157:H7.